We begin with the raw amino-acid sequence, 227 residues long: Cytochrome c oxidase subunit 2 (227 aa).

Over 1-14 the chain is Mitochondrial intermembrane; it reads MAYPFQLGLQDATS. A helical transmembrane segment spans residues 15 to 45; that stretch reads PIMEELTNFHDHTLMIVFLISSLVLYIISLM. The Mitochondrial matrix portion of the chain corresponds to 46–59; the sequence is LTTKLTHTSTMDAQ. Residues 60-87 traverse the membrane as a helical segment; the sequence is EVETIWTILPAVILILIALPSLRILYMM. Topologically, residues 88 to 227 are mitochondrial intermembrane; sequence DEINNPVLTV…YFENWSASMI (140 aa). Cu cation-binding residues include His161, Cys196, Glu198, Cys200, His204, and Met207. Glu198 lines the Mg(2+) pocket. Residue Tyr218 is modified to Phosphotyrosine.

Belongs to the cytochrome c oxidase subunit 2 family. Component of the cytochrome c oxidase (complex IV, CIV), a multisubunit enzyme composed of 14 subunits. The complex is composed of a catalytic core of 3 subunits MT-CO1, MT-CO2 and MT-CO3, encoded in the mitochondrial DNA, and 11 supernumerary subunits COX4I, COX5A, COX5B, COX6A, COX6B, COX6C, COX7A, COX7B, COX7C, COX8 and NDUFA4, which are encoded in the nuclear genome. The complex exists as a monomer or a dimer and forms supercomplexes (SCs) in the inner mitochondrial membrane with NADH-ubiquinone oxidoreductase (complex I, CI) and ubiquinol-cytochrome c oxidoreductase (cytochrome b-c1 complex, complex III, CIII), resulting in different assemblies (supercomplex SCI(1)III(2)IV(1) and megacomplex MCI(2)III(2)IV(2)). Found in a complex with TMEM177, COA6, COX18, COX20, SCO1 and SCO2. Interacts with TMEM177 in a COX20-dependent manner. Interacts with COX20. Interacts with COX16. Cu cation serves as cofactor.

Its subcellular location is the mitochondrion inner membrane. It carries out the reaction 4 Fe(II)-[cytochrome c] + O2 + 8 H(+)(in) = 4 Fe(III)-[cytochrome c] + 2 H2O + 4 H(+)(out). Component of the cytochrome c oxidase, the last enzyme in the mitochondrial electron transport chain which drives oxidative phosphorylation. The respiratory chain contains 3 multisubunit complexes succinate dehydrogenase (complex II, CII), ubiquinol-cytochrome c oxidoreductase (cytochrome b-c1 complex, complex III, CIII) and cytochrome c oxidase (complex IV, CIV), that cooperate to transfer electrons derived from NADH and succinate to molecular oxygen, creating an electrochemical gradient over the inner membrane that drives transmembrane transport and the ATP synthase. Cytochrome c oxidase is the component of the respiratory chain that catalyzes the reduction of oxygen to water. Electrons originating from reduced cytochrome c in the intermembrane space (IMS) are transferred via the dinuclear copper A center (CU(A)) of subunit 2 and heme A of subunit 1 to the active site in subunit 1, a binuclear center (BNC) formed by heme A3 and copper B (CU(B)). The BNC reduces molecular oxygen to 2 water molecules using 4 electrons from cytochrome c in the IMS and 4 protons from the mitochondrial matrix. This Rattus norvegicus (Rat) protein is Cytochrome c oxidase subunit 2.